The sequence spans 578 residues: Arginine--tRNA ligase (578 aa).

The 'HIGH' region motif lies at 127–137; that stretch reads PNLAKEMHVGH.

The protein belongs to the class-I aminoacyl-tRNA synthetase family. As to quaternary structure, monomer.

The protein resides in the cytoplasm. The catalysed reaction is tRNA(Arg) + L-arginine + ATP = L-arginyl-tRNA(Arg) + AMP + diphosphate. The chain is Arginine--tRNA ligase from Pseudomonas entomophila (strain L48).